Reading from the N-terminus, the 494-residue chain is MKYNDLRDFLTLLEQQGELKRITLPVDPHLEITEIADRTLRAGGPALLFENPKGYSMPVLCNLFGTPKRVAMGMGQEDVSALREVGKLLAFLKEPEPPKGFRDLFDKLPQFKQVLNMPTKRLRGAPCQQKIVSGDDVDLNRIPIMTCWPEDAAPLITWGLTVTRGPHKERQNLGIYRQQLIGKNKLIMRWLSHRGGALDYQEWCAAHPGERFPVSVALGADPATILGAVTPVPDTLSEYAFAGLLRGTKTEVVKCISNDLEVPASAEIVLEGYIEQGETAPEGPYGDHTGYYNEVDSFPVFTVTHITQREDAIYHSTYTGRPPDEPAVLGVALNEVFVPILQKQFPEIVDFYLPPEGCSYRLAVVTIKKQYAGHAKRVMMGVWSFLRQFMYTKFVIVCDDDVNARDWNDVIWAITTRMDPARDTVLVENTPIDYLDFASPVSGLGSKMGLDATNKWPGETQREWGRPIKKDPDVVAHIDAIWDELAIFNNGKSA.

Position 172 (asparagine 172) interacts with Mn(2+). Residues 175–177 (IYR), 189–191 (RWL), and 194–195 (RG) each bind prenylated FMN. Residue glutamate 238 participates in Mn(2+) binding. The active-site Proton donor is aspartate 287.

Belongs to the UbiD family. Homohexamer. It depends on prenylated FMN as a cofactor. Mn(2+) serves as cofactor.

It is found in the cell membrane. It carries out the reaction a 4-hydroxy-3-(all-trans-polyprenyl)benzoate + H(+) = a 2-(all-trans-polyprenyl)phenol + CO2. It functions in the pathway cofactor biosynthesis; ubiquinone biosynthesis. Catalyzes the decarboxylation of 3-octaprenyl-4-hydroxy benzoate to 2-octaprenylphenol, an intermediate step in ubiquinone biosynthesis. This Escherichia coli O139:H28 (strain E24377A / ETEC) protein is 3-octaprenyl-4-hydroxybenzoate carboxy-lyase.